The chain runs to 469 residues: DNA repair and recombination protein rad22 (469 aa).

Positions 265 to 296 (PAANNHHSEKAGTQINNKDKGSHNSAKPVQRS) are disordered. A compositionally biased stretch (polar residues) spans 287–296 (HNSAKPVQRS). 2 positions are modified to phosphoserine: Ser-296 and Ser-319. The interval 429–469 (LHDSTTSHNKSDLMRTNSDPQSAMRSRENYDATVDKKAKKG) is disordered. The span at 431 to 452 (DSTTSHNKSDLMRTNSDPQSAM) shows a compositional bias: polar residues. Positions 453–469 (RSRENYDATVDKKAKKG) are enriched in basic and acidic residues.

This sequence belongs to the RAD52 family. In terms of assembly, interacts with rhp51.

The protein localises to the nucleus. In terms of biological role, active in the repair of DNA damage and in mating-type switching. Probably involved in the repair of DNA double-strands breaks. Has a role in promoting S phase completion. The chain is DNA repair and recombination protein rad22 (rad22) from Schizosaccharomyces pombe (strain 972 / ATCC 24843) (Fission yeast).